A 455-amino-acid chain; its full sequence is L-serine dehydratase (455 aa).

It belongs to the iron-sulfur dependent L-serine dehydratase family. [4Fe-4S] cluster serves as cofactor.

The enzyme catalyses L-serine = pyruvate + NH4(+). The protein operates within carbohydrate biosynthesis; gluconeogenesis. This is L-serine dehydratase (sdaA) from Haemophilus influenzae (strain ATCC 51907 / DSM 11121 / KW20 / Rd).